The primary structure comprises 1091 residues: Protein CTR9 homolog (1091 aa).

Position 2 is an N-acetylalanine (Ala-2). TPR repeat units lie at residues 90–127 (GAYY…DMHE), 128–161 (PSTW…APDN), 163–195 (PALL…FPGC), 197–230 (AAVR…DPDN), 232–267 (EALV…YPYC), 305–338 (SHSF…TNNN), 343–376 (VFPY…YPDN), 377–410 (CETL…DPRD), 412–443 (QAFV…MKKG), 449–482 (IEVL…GIWI), 558–591 (IDAY…DDKN), 593–625 (NALS…TDGK), 640–673 (AAMR…HNSN), 674–707 (MYAA…ASGS), 713–746 (PDVW…FFYN), and 749–782 (SQIL…TPSN). The disordered stretch occupies residues 919–1091 (FQRIKEQWKS…EEEEEEEEAN (173 aa)). Positions 951-965 (ERRRKKGGKRRKKDK) are enriched in basic residues. Acidic residues-rich tracts occupy residues 974–993 (DDEE…DEDA), 1003–1016 (MTTQ…DDDA), 1026–1035 (EDPDVDDDEV), and 1080–1091 (NMEEEEEEEEAN).

In terms of assembly, component of the nuclear PAF1 complex (PAF1C), which consists of VIP2/ELF7/PAF1, VIP3/SKI8/WDR61, VIP4/LEO1, VIP5/RTF1, VIP6/ELF8/CTR9 and CDC73. Interacts with VIP3 and VIP4. As to expression, expressed in roots, leaves and shoot apex.

The protein localises to the nucleus. Functionally, component of the PAF1 complex (PAF1C) which is involved in histone modifications such as methylation on histone H3 'Lys-4' (H3K4me3). Involved in regulation of flowering time. Required for the expression of the MADS box genes and flowering repressors FLC, AGL27/FLM and AGL31/MAF2. Required for histone H3 trimethylation on 'Lys-4' H3K4me3 at the FLC and AGL27/FLM loci. Involved in the control of seed dormancy and germination. The chain is Protein CTR9 homolog from Arabidopsis thaliana (Mouse-ear cress).